A 341-amino-acid polypeptide reads, in one-letter code: Uroporphyrinogen decarboxylase (341 aa).

Substrate-binding positions include 23–27, aspartate 73, tyrosine 148, serine 203, and histidine 318; that span reads RQAGR.

The protein belongs to the uroporphyrinogen decarboxylase family. Homodimer.

It localises to the cytoplasm. It catalyses the reaction uroporphyrinogen III + 4 H(+) = coproporphyrinogen III + 4 CO2. Its pathway is porphyrin-containing compound metabolism; protoporphyrin-IX biosynthesis; coproporphyrinogen-III from 5-aminolevulinate: step 4/4. In terms of biological role, catalyzes the decarboxylation of four acetate groups of uroporphyrinogen-III to yield coproporphyrinogen-III. The polypeptide is Uroporphyrinogen decarboxylase (Brucella anthropi (strain ATCC 49188 / DSM 6882 / CCUG 24695 / JCM 21032 / LMG 3331 / NBRC 15819 / NCTC 12168 / Alc 37) (Ochrobactrum anthropi)).